Consider the following 566-residue polypeptide: Arginine--tRNA ligase (566 aa).

The short motif at Pro123–His133 is the 'HIGH' region element.

It belongs to the class-I aminoacyl-tRNA synthetase family. Monomer.

It is found in the cytoplasm. The enzyme catalyses tRNA(Arg) + L-arginine + ATP = L-arginyl-tRNA(Arg) + AMP + diphosphate. The protein is Arginine--tRNA ligase of Alkaliphilus metalliredigens (strain QYMF).